We begin with the raw amino-acid sequence, 175 residues long: DM domain-containing protein mab-23 (175 aa).

The segment at residues 8 to 56 is a DNA-binding region (DM); it reads CQLCANHGIFNQPKKGHKQKCPYRTCPCSLCALNTKRRALDQIERQLKH. The tract at residues 58-93 is disordered; it reads NEPMTGQTATSMASPTPECPLSPTTPKMTPHTPTSG. Residues 59–71 are compositionally biased toward polar residues; that stretch reads EPMTGQTATSMAS. Positions 81-91 are enriched in low complexity; that stretch reads TTPKMTPHTPT.

In terms of tissue distribution, expressed in a limited number of non-sex-specific tissues in males, including 6-8 unidentified neurons of the head, ventral body wall muscle, and the PHCL/R neurons.

The protein localises to the nucleus. Functionally, probable transcription factor that plays a role in the development of the dopaminergic neurons of the male-specific genital sensilla (simple sense organs) known as rays, by negatively regulating the activity of the transcription factor ast-1. Involved in male mating behavior, probably as a result of a role in the differentiation of male-specific diagonal muscles. Required for development of the male proctodeum. May be dispensable in hermaphrodites. The polypeptide is DM domain-containing protein mab-23 (Caenorhabditis elegans).